We begin with the raw amino-acid sequence, 229 residues long: MAKKKAFTPLLYLASIVFLPWWISLSFNKSLKSWITNWWDTRQSETFLNDIQEKSILEQFIEVEELFLLDEMIKEYPETHLQKLRIGIQKETIQLIKLHNEDHIHTILHFSTNLICFVILSGYSILGNEELLILNSWAQEFLYNLSDTIKAFSILLLTDLCIGFHSPHGWELMIGSIYKDFGFTHNDQIISGLVSTFPVILDTIFKYWIFRYLNRVSPSLVVIYHSMND.

4 helical membrane-spanning segments follow: residues 7-27 (FTPL…SLSF), 114-134 (LICF…LLIL), 154-174 (ILLL…ELMI), and 189-209 (IISG…KYWI).

The protein belongs to the CemA family.

It is found in the plastid. Its subcellular location is the chloroplast inner membrane. It catalyses the reaction K(+)(in) + H(+)(out) = K(+)(out) + H(+)(in). Its function is as follows. Contributes to K(+)/H(+) antiport activity by supporting proton efflux to control proton extrusion and homeostasis in chloroplasts in a light-dependent manner to modulate photosynthesis. Prevents excessive induction of non-photochemical quenching (NPQ) under continuous-light conditions. Indirectly promotes efficient inorganic carbon uptake into chloroplasts. In Gossypium barbadense (Sea Island cotton), this protein is Potassium/proton antiporter CemA.